The sequence spans 855 residues: DNA mismatch repair protein MutS (855 aa).

Residue 616–623 (GPNMGGKS) participates in ATP binding.

It belongs to the DNA mismatch repair MutS family.

This protein is involved in the repair of mismatches in DNA. It is possible that it carries out the mismatch recognition step. This protein has a weak ATPase activity. This is DNA mismatch repair protein MutS from Salmonella gallinarum (strain 287/91 / NCTC 13346).